A 667-amino-acid polypeptide reads, in one-letter code: MASSCSQALRHHACKSSKILRIHLQKSWTNRSFAAYQQPDVSSQEEIVIPKKKTWSKEAVLQALASTVKRDPTASDYRLQDDSFLTPKTASDFKLFCRSQESGRNAAKYFINKYPKYFEKDYAQPHIPCLMPETLDAQLEDVSEAALKERIQLRKVKAAVDLYDQLLQAGTSVSLDLTNDLLDLICLYGEADPVQETFEAEQRSEEMEDIQDETQTKKGRSPKASDLLKTSWKENNNAERIFGLLSEPNTRSYSALIRGMVKHAAYTQAFSTYTDLLNNRLKADVHIFNALLAAVPAVRPKYNEKWELILDLLKQMAEQKVKPNLLTLNAILKSLRRCGALGRSQAFPVISEMKVLSIEPSLASYNHLLAIFYRSGAQVQTPTDVLVEVMNEVSGKSFTPQDPDDAQFFTTAMRVCLDTKDMEQAYRVHELLGVGDNWRFMGSDFQQSIYYAWFFSLLCMMENIDVVMKWYRDLVPSVYYPSSNAMSDLLRALDTDSRLDLIPKIWKDMKQLGHGNRQQLVEEVLTLMAREKHCPEVQESFADCALDIMKMYDTNERGKVIMSWTASSLSDVTTILLAANRKQEAWEMLKLFRTHNRVPSAELLNQFVTCVKEAGQVSQAVELVQISAAFCLSETPKLIQRVQQEFELSEEHKNILSDLEIQTFNGD.

The N-terminal 11 residues, 1–11, are a transit peptide targeting the mitochondrion; it reads MASSCSQALRH. Residues 199–226 are disordered; that stretch reads EAEQRSEEMEDIQDETQTKKGRSPKASD. PPR repeat units lie at residues 249-283, 284-323, 324-360, 361-400, 482-516, and 565-599; these read NTRSYSALIRGMVKHAAYTQAFSTYTDLLNNRLKA, DVHIFNALLAAVPAVRPKYNEKWELILDLLKQMAEQKVKP, NLLTLNAILKSLRRCGALGRSQAFPVISEMKVLSIEP, SLASYNHLLAIFYRSGAQVQTPTDVLVEVMNEVSGKSFTP, SSNAMSDLLRALDTDSRLDLIPKIWKDMKQLGHGN, and TASSLSDVTTILLAANRKQEAWEMLKLFRTHNRVP.

Belongs to the mitochondrion-specific ribosomal protein mS39 family.

Its subcellular location is the mitochondrion. Functionally, mitochondrial RNA-binding protein that may have a role in mitochondrial translation. This chain is Small ribosomal subunit protein mS39 (ptcd3), found in Danio rerio (Zebrafish).